The chain runs to 257 residues: S-methyl-5'-thioadenosine phosphorylase (257 aa).

Phosphate contacts are provided by residues Ser10 and 50–51; that span reads RH. A substrate-binding site is contributed by Met180. Thr181 contacts phosphate. 204 to 206 provides a ligand contact to substrate; it reads DYD.

The protein belongs to the PNP/MTAP phosphorylase family. MTAP subfamily. In terms of assembly, homohexamer. Dimer of a homotrimer.

The catalysed reaction is S-methyl-5'-thioadenosine + phosphate = 5-(methylsulfanyl)-alpha-D-ribose 1-phosphate + adenine. Its pathway is amino-acid biosynthesis; L-methionine biosynthesis via salvage pathway; S-methyl-5-thio-alpha-D-ribose 1-phosphate from S-methyl-5'-thioadenosine (phosphorylase route): step 1/1. Its function is as follows. Catalyzes the reversible phosphorylation of S-methyl-5'-thioadenosine (MTA) to adenine and 5-methylthioribose-1-phosphate. Involved in the breakdown of MTA, a major by-product of polyamine biosynthesis. Responsible for the first step in the methionine salvage pathway after MTA has been generated from S-adenosylmethionine. Has broad substrate specificity with 6-aminopurine nucleosides as preferred substrates. The protein is S-methyl-5'-thioadenosine phosphorylase of Pyrococcus horikoshii (strain ATCC 700860 / DSM 12428 / JCM 9974 / NBRC 100139 / OT-3).